A 261-amino-acid polypeptide reads, in one-letter code: Phosphatidylglycerol--prolipoprotein diacylglyceryl transferase (261 aa).

Helical transmembrane passes span 13 to 33 (LQIR…YWYI), 50 to 70 (VISW…ILFY), 86 to 106 (WNGG…MYIF), and 112 to 132 (IDVL…IFFG). Arg133 contributes to the a 1,2-diacyl-sn-glycero-3-phospho-(1'-sn-glycerol) binding site. The next 3 helical transmembrane spans lie at 169 to 189 (LYEA…LFFF), 197 to 217 (GMLS…IEFV), and 232 to 252 (ITMG…FIKL).

The protein belongs to the Lgt family.

It is found in the cell inner membrane. The catalysed reaction is L-cysteinyl-[prolipoprotein] + a 1,2-diacyl-sn-glycero-3-phospho-(1'-sn-glycerol) = an S-1,2-diacyl-sn-glyceryl-L-cysteinyl-[prolipoprotein] + sn-glycerol 1-phosphate + H(+). Its pathway is protein modification; lipoprotein biosynthesis (diacylglyceryl transfer). Functionally, catalyzes the transfer of the diacylglyceryl group from phosphatidylglycerol to the sulfhydryl group of the N-terminal cysteine of a prolipoprotein, the first step in the formation of mature lipoproteins. The chain is Phosphatidylglycerol--prolipoprotein diacylglyceryl transferase from Ehrlichia canis (strain Jake).